The primary structure comprises 921 residues: Respiratory burst oxidase homolog protein D (921 aa).

The segment at 1–71 (MKMRRGNSSN…RSNSVAGGRG (71 aa)) is disordered. Residues 1–376 (MKMRRGNSSN…KYFILDNWQR (376 aa)) are Cytoplasmic-facing. 4 positions are modified to phosphoserine: serine 8, serine 9, serine 26, and serine 39. Over residues 21–31 (NSDTNSDTESI) the composition is skewed to polar residues. Over residues 44 to 53 (RPKRASKKNA) the composition is skewed to basic residues. EF-hand-like stretches follow at residues 193–203 (SADSNGLLLSA) and 230–241 (NNVSGDAITKEQ). EF-hand domains lie at 253 to 288 (SFDA…SASA) and 297 to 332 (QAKE…APNQ). Ca(2+)-binding residues include aspartate 266, aspartate 268, aspartate 270, arginine 272, and glutamate 277. Phosphoserine is present on residues serine 339, serine 343, and serine 347. Residues 377–397 (LWIMMLWLGICGGLFTYKFIQ) form a helical membrane-spanning segment. The Extracellular segment spans residues 398-461 (YKNKAAYGVM…FDDSLNFHKV (64 aa)). Residues 415 to 572 (KGGAETLKFN…LFIIVYALLI (158 aa)) form the Ferric oxidoreductase domain. A helical membrane pass occupies residues 462–482 (IASGIVVGVLLHAGAHLTCDF). Residues 483–516 (PRLIAADEDTYEPMEKYFGDQPTSYWWFVKGVEG) lie on the Cytoplasmic side of the membrane. The chain crosses the membrane as a helical span at residues 517 to 537 (WTGIVMVVLMAIAFTLATPWF). The Extracellular segment spans residues 538-559 (RRNKLNLPNFLKKLTGFNAFWY). A helical membrane pass occupies residues 560 to 580 (THHLFIIVYALLIVHGIKLYL). The Cytoplasmic portion of the chain corresponds to 581–588 (TKIWYQKT). The chain crosses the membrane as a helical span at residues 589-606 (TWMYLAVPILLYASERLL). Topologically, residues 607-734 (RAFRSSIKPV…PYGAPAQDYK (128 aa)) are extracellular. The FAD-binding FR-type domain maps to 611–732 (SSIKPVKMIK…DGPYGAPAQD (122 aa)). A helical transmembrane segment spans residues 735–755 (KYDVVLLVGLGIGATPMISIL). Topologically, residues 756 to 921 (KDIINNMKGP…TKFDFHKENF (166 aa)) are cytoplasmic.

It belongs to the RBOH (TC 5.B.1.3) family. As to quaternary structure, monomer and homodimer. Interacts with BIK1 and FLS2. Interacts with PBL13. Binds to SIK1 upon flagellin perception and becomes activated by phosphorylation. In terms of processing, phosphorylated at Ser-39, Ser-343 and Ser-347 by BIK1 upon flagellin (flg22) treatment. Activated by phosphorylation at Ser-347 mediated by SIK1 and at Ser-8, Ser-9 and Ser-339 upon flagellin (e.g. flg22) perception. As to expression, more abundant in roots than in leaves, stems or inflorescences. Expressed in mesophyll and guard cells.

It is found in the membrane. With respect to regulation, inhibited by diphenylene iodinium (DPI). In terms of biological role, calcium-dependent NADPH oxidase that generates superoxide. Involved in the generation of reactive oxygen species (ROS) during incompatible interactions with pathogens, in response to pathogen-associated molecular pattern (PAMP)-triggered immunity (PTI) signaling and in UV-B and abscisic acid ROS-dependent signaling and via SIK1 mediated activation by phosphorylation. Might be required for ROS signal amplification during light stress. This Arabidopsis thaliana (Mouse-ear cress) protein is Respiratory burst oxidase homolog protein D.